We begin with the raw amino-acid sequence, 384 residues long: Probable L-aspartate decarboxylase (384 aa).

The residue at position 233 (Lys-233) is an N6-(pyridoxal phosphate)lysine.

This sequence belongs to the group II decarboxylase family. MfnA subfamily. It depends on pyridoxal 5'-phosphate as a cofactor.

The enzyme catalyses L-aspartate + H(+) = beta-alanine + CO2. The protein operates within cofactor biosynthesis; coenzyme A biosynthesis. In terms of biological role, catalyzes the decarboxylation of L-aspartate to produce beta-alanine. The protein is Probable L-aspartate decarboxylase of Pyrococcus abyssi (strain GE5 / Orsay).